Consider the following 472-residue polypeptide: Argininosuccinate lyase (472 aa).

It belongs to the lyase 1 family. Argininosuccinate lyase subfamily.

The protein localises to the cytoplasm. The catalysed reaction is 2-(N(omega)-L-arginino)succinate = fumarate + L-arginine. It participates in amino-acid biosynthesis; L-arginine biosynthesis; L-arginine from L-ornithine and carbamoyl phosphate: step 3/3. The sequence is that of Argininosuccinate lyase from Mycolicibacterium paratuberculosis (strain ATCC BAA-968 / K-10) (Mycobacterium paratuberculosis).